The sequence spans 233 residues: MARKVVVVDDEKPIADILEFNLKKEGYEVFCAYDGNDAVDLIYDEEPDIVLLDIMLPGRDGMEVCREVRKKYEMPIIMLTAKDSEIDKVLGLELGADDYVTKPFSTRELIARVKANLRRHYSQPAQEVNDASNEITIKDIVIYPDAYSIKKRGDDIELTHREFELFHYLSKHMGQVMTREHLLQTVWGYDYFGDVRTVDVTIRRLREKIEDDPSHPEYIVTRRGVGYFLQQHE.

The Response regulatory domain maps to 4–117; it reads KVVVVDDEKP…ELIARVKANL (114 aa). Asp-53 carries the post-translational modification 4-aspartylphosphate. A DNA-binding region (ompR/PhoB-type) is located at residues 132 to 231; that stretch reads SNEITIKDIV…RRGVGYFLQQ (100 aa).

Phosphorylated by WalK.

The protein resides in the cytoplasm. Member of the two-component regulatory system WalK/WalR. This chain is Transcriptional regulatory protein WalR (walR), found in Staphylococcus saprophyticus subsp. saprophyticus (strain ATCC 15305 / DSM 20229 / NCIMB 8711 / NCTC 7292 / S-41).